Here is a 244-residue protein sequence, read N- to C-terminus: Aspartate/glutamate leucyltransferase (244 aa).

The protein belongs to the R-transferase family. Bpt subfamily.

The protein localises to the cytoplasm. It catalyses the reaction N-terminal L-glutamyl-[protein] + L-leucyl-tRNA(Leu) = N-terminal L-leucyl-L-glutamyl-[protein] + tRNA(Leu) + H(+). The catalysed reaction is N-terminal L-aspartyl-[protein] + L-leucyl-tRNA(Leu) = N-terminal L-leucyl-L-aspartyl-[protein] + tRNA(Leu) + H(+). Its function is as follows. Functions in the N-end rule pathway of protein degradation where it conjugates Leu from its aminoacyl-tRNA to the N-termini of proteins containing an N-terminal aspartate or glutamate. This Paramagnetospirillum magneticum (strain ATCC 700264 / AMB-1) (Magnetospirillum magneticum) protein is Aspartate/glutamate leucyltransferase.